We begin with the raw amino-acid sequence, 716 residues long: Photosystem I P700 chlorophyll a apoprotein A1 (716 aa).

Transmembrane regions (helical) follow at residues 57-80, 143-166, 182-206, 278-296, 333-356, 372-398, 420-442, and 518-536; these read VFSA…FHGA, LYCT…FHYH, LNHH…HVSL, TVHH…GHMY, WHAQ…HHMY, LSLF…IFMV, AIIS…LYIH, and FLVH…LILL. Positions 560 and 569 each coordinate [4Fe-4S] cluster. A run of 2 helical transmembrane segments spans residues 576 to 597 and 651 to 673; these read HVFL…HFSW and LSAY…MFLF. His-662 provides a ligand contact to chlorophyll a'. Residues Met-670 and Tyr-678 each contribute to the chlorophyll a site. Trp-679 provides a ligand contact to phylloquinone. A helical transmembrane segment spans residues 711-716; the sequence is AVGVAH.

Belongs to the PsaA/PsaB family. In terms of assembly, the PsaA/B heterodimer binds the P700 chlorophyll special pair and subsequent electron acceptors. PSI consists of a core antenna complex that captures photons, and an electron transfer chain that converts photonic excitation into a charge separation. The eukaryotic PSI reaction center is composed of at least 11 subunits. P700 is a chlorophyll a/chlorophyll a' dimer, A0 is one or more chlorophyll a, A1 is one or both phylloquinones and FX is a shared 4Fe-4S iron-sulfur center. serves as cofactor.

The protein resides in the plastid. Its subcellular location is the chloroplast thylakoid membrane. The catalysed reaction is reduced [plastocyanin] + hnu + oxidized [2Fe-2S]-[ferredoxin] = oxidized [plastocyanin] + reduced [2Fe-2S]-[ferredoxin]. In terms of biological role, psaA and PsaB bind P700, the primary electron donor of photosystem I (PSI), as well as the electron acceptors A0, A1 and FX. PSI is a plastocyanin-ferredoxin oxidoreductase, converting photonic excitation into a charge separation, which transfers an electron from the donor P700 chlorophyll pair to the spectroscopically characterized acceptors A0, A1, FX, FA and FB in turn. Oxidized P700 is reduced on the lumenal side of the thylakoid membrane by plastocyanin. This Araucaria araucana (Monkey-puzzle tree) protein is Photosystem I P700 chlorophyll a apoprotein A1.